A 65-amino-acid polypeptide reads, in one-letter code: Antimicrobial peptide 1 (65 aa).

The signal sequence occupies residues methionine 1–serine 27. 3 disulfides stabilise this stretch: cysteine 30–cysteine 47, cysteine 37–cysteine 51, and cysteine 46–cysteine 62.

Belongs to the AMP family. Seed specific.

Its subcellular location is the secreted. Functionally, possesses antifungal activity. This Phytolacca americana (American pokeweed) protein is Antimicrobial peptide 1.